Consider the following 106-residue polypeptide: Large ribosomal subunit protein bL21 (106 aa).

It belongs to the bacterial ribosomal protein bL21 family. In terms of assembly, part of the 50S ribosomal subunit. Contacts protein L20.

Its function is as follows. This protein binds to 23S rRNA in the presence of protein L20. This is Large ribosomal subunit protein bL21 from Streptomyces griseus subsp. griseus (strain JCM 4626 / CBS 651.72 / NBRC 13350 / KCC S-0626 / ISP 5235).